Consider the following 178-residue polypeptide: UPF0215 protein STK_03040 (178 aa).

Belongs to the UPF0215 family.

The chain is UPF0215 protein STK_03040 from Sulfurisphaera tokodaii (strain DSM 16993 / JCM 10545 / NBRC 100140 / 7) (Sulfolobus tokodaii).